Here is a 206-residue protein sequence, read N- to C-terminus: Smr domain-containing protein C11H11.03c (206 aa).

One can recognise a Smr domain in the interval 75 to 150 (IDLHGLYIDE…NEGRIYVYLP (76 aa)).

It is found in the cytoplasm. Its subcellular location is the nucleus. The chain is Smr domain-containing protein C11H11.03c from Schizosaccharomyces pombe (strain 972 / ATCC 24843) (Fission yeast).